A 485-amino-acid polypeptide reads, in one-letter code: Aspartyl protease family protein 2 (485 aa).

Positions 1–23 (MVGRRKALLFSLCFFFLSLPSFS) are cleaved as a signal peptide. Residues 43–71 (PVSFQPDSDSESLLESEFESGSDSESSSS) are disordered. Residues 50-64 (SDSESLLESEFESGS) show a composition bias toward acidic residues. Residues 142-480 (YFTRLGVGTP…DLASSRVGFA (339 aa)) enclose the Peptidase A1 domain. Catalysis depends on residues aspartate 160 and aspartate 365.

The protein belongs to the peptidase A1 family.

Aspartyl protease. Not able to cleave BAG6. This chain is Aspartyl protease family protein 2, found in Arabidopsis thaliana (Mouse-ear cress).